The sequence spans 375 residues: Protein SSUH2 homolog (375 aa).

Expressed in enterocytes of small and large intestinal mucosa (at protein level). Expressed in chromaffine and interstitial cells. Expressed in peripheral blood and gingival cells.

The protein localises to the cytoplasm. Its subcellular location is the nucleus. Plays a role in odontogenesis. This Homo sapiens (Human) protein is Protein SSUH2 homolog.